The following is a 124-amino-acid chain: Autophagy-related protein 8 (124 aa).

Residue Gly116 is the site of Phosphatidylethanolamine amidated glycine attachment. Positions 117-124 (GAGPLLEK) are cleaved as a propeptide — removed in mature form.

This sequence belongs to the ATG8 family. Conjugation to phosphatidylethanolamine (PE) leads to homodimerization. Interacts with ATG1, ATG3, ATG4, ATG7 and ATG12. In terms of processing, the C-terminal 8 residues of ATG8 are removed by ATG4 to expose Gly-116 at the C-terminus. This Gly-116 forms then a thioester bond with the 'Cys-550' of ATG7 (E1-like activating enzyme) before being transferred to the 'Cys-244' of ATG3 (the specific E2 conjugating enzyme), in order to be finally amidated with phosphatidylethanolamine. This lipid modification anchors ATG8 to membranes and can be reversed by ATG4, releasing soluble ATG8.

It is found in the cytoplasmic vesicle. Its subcellular location is the cvt vesicle membrane. The protein resides in the autophagosome membrane. It localises to the vacuole membrane. Its function is as follows. Ubiquitin-like modifier involved in cytoplasm to vacuole transport (Cvt) vesicles and autophagosome formation. With ATG4, mediates the delivery of the vesicles and autophagosomes to the vacuole via the microtubule cytoskeleton. Required for selective autophagic degradation of the nucleus (nucleophagy) as well as for mitophagy which contributes to regulate mitochondrial quantity and quality by eliminating the mitochondria to a basal level to fulfill cellular energy requirements and preventing excess ROS production. Also participates in membrane fusion events that take place in the early secretory pathway. Also involved in endoplasmic reticulum-specific autophagic process and is essential for the survival of cells subjected to severe ER stress. The ATG8-PE conjugate mediates tethering between adjacent membranes and stimulates membrane hemifusion, leading to expansion of the autophagosomal membrane during autophagy. Moreover not only conjugation, but also subsequent ATG8-PE deconjugation is an important step required to facilitate multiple events during macroautophagy, and especially for efficient autophagosome biogenesis, the assembly of ATG9-containing tubulovesicular clusters into phagophores/autophagosomes, and for the disassembly of PAS-associated ATG components. The sequence is that of Autophagy-related protein 8 from Kluyveromyces marxianus (strain DMKU3-1042 / BCC 29191 / NBRC 104275) (Yeast).